An 876-amino-acid polypeptide reads, in one-letter code: Phosphoenolpyruvate carboxylase (876 aa).

Catalysis depends on residues His138 and Lys543.

This sequence belongs to the PEPCase type 1 family. Mg(2+) is required as a cofactor.

It catalyses the reaction oxaloacetate + phosphate = phosphoenolpyruvate + hydrogencarbonate. Forms oxaloacetate, a four-carbon dicarboxylic acid source for the tricarboxylic acid cycle. In Vibrio atlanticus (strain LGP32) (Vibrio splendidus (strain Mel32)), this protein is Phosphoenolpyruvate carboxylase.